The following is a 644-amino-acid chain: Replication protein E1 (644 aa).

Positions 86 to 88 (KRK) match the Nuclear localization signal motif. 2 positions are modified to phosphoserine; by host: serine 92 and serine 96. The interval 180–346 (VPTSPTNQLL…LTIIQHGVDD (167 aa)) is DNA-binding region. The region spanning 445–595 (VEFITFLCAL…LPFDKNRNPV (151 aa)) is the SF3 helicase domain. 471 to 478 (GPANTGKS) is an ATP binding site. Lysine 552 is covalently cross-linked (Glycyl lysine isopeptide (Lys-Gly) (interchain with G-Cter in SUMO)).

Belongs to the papillomaviridae E1 protein family. In terms of assembly, can form hexamers. Interacts with E2 protein; this interaction increases E1 DNA binding specificity. Interacts with host DNA polymerase subunit POLA2. Interacts with host single stranded DNA-binding protein RPA1. Interacts with host TOP1; this interaction stimulates the enzymatic activity of TOP1. In terms of processing, phosphorylated. Post-translationally, sumoylated.

The protein localises to the host nucleus. It catalyses the reaction Couples ATP hydrolysis with the unwinding of duplex DNA by translocating in the 3'-5' direction.. The enzyme catalyses ATP + H2O = ADP + phosphate + H(+). In terms of biological role, ATP-dependent DNA 3'-5' helicase required for initiation of viral DNA replication. It forms a complex with the viral E2 protein. The E1-E2 complex binds to the replication origin which contains binding sites for both proteins. During the initial step, a dimer of E1 interacts with a dimer of protein E2 leading to a complex that binds the viral origin of replication with high specificity. Then, a second dimer of E1 displaces the E2 dimer in an ATP-dependent manner to form the E1 tetramer. Following this, two E1 monomers are added to each half of the site, which results in the formation of two E1 trimers on the viral ori. Subsequently, two hexamers will be created. The double hexamer acts as a bi-directional helicase machinery and unwinds the viral DNA and then recruits the host DNA polymerase to start replication. This chain is Replication protein E1, found in Human papillomavirus 59.